The chain runs to 258 residues: Imidazole glycerol phosphate synthase subunit HisF (258 aa).

Active-site residues include Asp-11 and Asp-130.

It belongs to the HisA/HisF family. Heterodimer of HisH and HisF.

The protein localises to the cytoplasm. The enzyme catalyses 5-[(5-phospho-1-deoxy-D-ribulos-1-ylimino)methylamino]-1-(5-phospho-beta-D-ribosyl)imidazole-4-carboxamide + L-glutamine = D-erythro-1-(imidazol-4-yl)glycerol 3-phosphate + 5-amino-1-(5-phospho-beta-D-ribosyl)imidazole-4-carboxamide + L-glutamate + H(+). The protein operates within amino-acid biosynthesis; L-histidine biosynthesis; L-histidine from 5-phospho-alpha-D-ribose 1-diphosphate: step 5/9. In terms of biological role, IGPS catalyzes the conversion of PRFAR and glutamine to IGP, AICAR and glutamate. The HisF subunit catalyzes the cyclization activity that produces IGP and AICAR from PRFAR using the ammonia provided by the HisH subunit. In Bradyrhizobium sp. (strain ORS 278), this protein is Imidazole glycerol phosphate synthase subunit HisF.